We begin with the raw amino-acid sequence, 335 residues long: Protein BRASSINAZOLE-RESISTANT 2 (335 aa).

A compositionally biased stretch (low complexity) spans 1–19; it reads MTSDGATSTSAAAAAAAMA. 3 disordered regions span residues 1–40, 85–122, and 164–190; these read MTSDGATSTSAAAAAAAMATRRKPSWRERENNRRRERRRR, TYRKGHKPLPGDMAGSSSRATPYSSHNQSPLSSTFDSP, and PPLRISNSAPVTPPVSSPTSRNPKPLP. The segment at 22 to 103 is required for DNA-binding; the sequence is RKPSWREREN…PGDMAGSSSR (82 aa). Positions 99–120 are enriched in polar residues; sequence GSSSRATPYSSHNQSPLSSTFD. A Phosphothreonine modification is found at threonine 175. The segment at 231-251 is PEST-like; it reads HAPATIPECDESDSSTVDSGH.

It belongs to the BZR/LAT61 family. As to quaternary structure, interacts with ASK7/BIN2 through its C-terminal domain and with the bHLH transcription factors BIM1, BIM2 and BIM3 through its C- and N-terminal domains. Interacts (via N-terminus) with REF6 and ELF6. Interacts with MYB30. Interacts with IWS1. Interacts with ASHH2/SDG8. Binds to MYB56 when dephosphorylated in the nucleus of quiescent center (QC) cells. Binds to WRKY46, WRKY54 and WRKY70 to cooperatively regulate the expression of target genes. Post-translationally, phosphorylated by ASK7/BIN2. Phosphorylation increases protein degradation and/or interferes with the nuclear localization. Ubiquitously expressed in cotyledons, leaves, hypocotyls and roots.

Its subcellular location is the nucleus. The protein resides in the cytoplasm. Its function is as follows. Positive regulator of brassinosteroid (BR) signaling. Transcription factor that activates target gene expression by binding specifically to the DNA sequence 5'-CANNTG-3'(E box) through its N-terminal domain. Can bind individually to the promoter as a homodimer or synergistically as a heterodimer with BIM1, BIM2 or BIM3. The C-terminal domain is probably involved in transcriptional activation. Recruits the transcription elongation factor IWS1 to control BR-regulated gene expression. Forms a trimeric complex with IWS1 and ASHH2/SDG8 to regulate BR-regulated gene expression. Promotes quiescent center (QC) self-renewal by cell divisions in the primary root. Binds to the E-boxes of the BRAVO promoter to repress its expression. The chain is Protein BRASSINAZOLE-RESISTANT 2 from Arabidopsis thaliana (Mouse-ear cress).